The chain runs to 68 residues: Large ribosomal subunit protein bL31 (68 aa).

Zn(2+)-binding residues include Cys-16, Cys-18, Cys-36, and Cys-39.

Belongs to the bacterial ribosomal protein bL31 family. Type A subfamily. In terms of assembly, part of the 50S ribosomal subunit. Zn(2+) is required as a cofactor.

Its function is as follows. Binds the 23S rRNA. The chain is Large ribosomal subunit protein bL31 from Dictyoglomus thermophilum (strain ATCC 35947 / DSM 3960 / H-6-12).